Here is a 361-residue protein sequence, read N- to C-terminus: Molybdenum import ATP-binding protein ModC (361 aa).

An ABC transporter domain is found at 1-235 (MDGLRLRFRR…VDLPLALDDD (235 aa)). 33-40 (GHSGSGKS) is a binding site for ATP. Residues 296 to 361 (QSSILNRLPV…AQIKSVAVLA (66 aa)) form the Mop domain.

Belongs to the ABC transporter superfamily. Molybdate importer (TC 3.A.1.8) family. In terms of assembly, the complex is composed of two ATP-binding proteins (ModC), two transmembrane proteins (ModB) and a solute-binding protein (ModA).

It is found in the cell inner membrane. It carries out the reaction molybdate(out) + ATP + H2O = molybdate(in) + ADP + phosphate + H(+). In terms of biological role, part of the ABC transporter complex ModABC involved in molybdenum import. Responsible for energy coupling to the transport system. The polypeptide is Molybdenum import ATP-binding protein ModC (Pseudomonas aeruginosa (strain ATCC 15692 / DSM 22644 / CIP 104116 / JCM 14847 / LMG 12228 / 1C / PRS 101 / PAO1)).